The primary structure comprises 131 residues: Snaclec macrovipecetin subunit alpha (131 aa).

3 disulfides stabilise this stretch: cysteine 2–cysteine 13, cysteine 30–cysteine 125, and cysteine 100–cysteine 117. A C-type lectin domain is found at 9–126; sequence HEEHCYKVFR…CEDKNPFICK (118 aa).

As to quaternary structure, heterodimer of subunits alpha and beta; disulfide-linked. Expressed by the venom gland.

The protein resides in the secreted. Interferes with one step of hemostasis (modulation of platelet aggregation, or coagulation cascade, for example). This is Snaclec macrovipecetin subunit alpha from Macrovipera lebetinus (Levantine viper).